The following is a 307-amino-acid chain: Universal stress protein A family protein C25B2.10 (307 aa).

The segment at methionine 1–arginine 63 is disordered. The span at proline 21 to glutamine 30 shows a compositional bias: basic and acidic residues. The residue at position 44 (serine 44) is a Phosphoserine. Phosphothreonine is present on threonine 48. A phosphoserine mark is found at serine 98 and serine 102.

This sequence belongs to the universal stress protein A family.

It is found in the barrier septum. The protein localises to the cell tip. This chain is Universal stress protein A family protein C25B2.10, found in Schizosaccharomyces pombe (strain 972 / ATCC 24843) (Fission yeast).